The primary structure comprises 100 residues: NADH-quinone oxidoreductase subunit K (100 aa).

A run of 3 helical transmembrane segments spans residues 4-24 (VTWYLWLAAMLFTIGLSGVLL), 29-49 (LIVMMSVELMLNAANLTFLAF), and 61-81 (IAFFVIAVAAAEAAVGLAVVI).

It belongs to the complex I subunit 4L family. NDH-1 is composed of 14 different subunits. Subunits NuoA, H, J, K, L, M, N constitute the membrane sector of the complex.

The protein localises to the cell inner membrane. It catalyses the reaction a quinone + NADH + 5 H(+)(in) = a quinol + NAD(+) + 4 H(+)(out). Functionally, NDH-1 shuttles electrons from NADH, via FMN and iron-sulfur (Fe-S) centers, to quinones in the respiratory chain. The immediate electron acceptor for the enzyme in this species is believed to be ubiquinone. Couples the redox reaction to proton translocation (for every two electrons transferred, four hydrogen ions are translocated across the cytoplasmic membrane), and thus conserves the redox energy in a proton gradient. The polypeptide is NADH-quinone oxidoreductase subunit K (Anaeromyxobacter sp. (strain Fw109-5)).